The following is a 490-amino-acid chain: Metal cation symporter ZIP14 (490 aa).

Positions 1 to 28 (MELLRPALPSYFLLTLLSIWTAASEARA) are cleaved as a signal peptide. Residues 29 to 155 (VSTGMPTISA…PSSVEVWGYG (127 aa)) are Extracellular-facing. N-linked (GlcNAc...) asparagine glycosylation is found at N75, N85, and N100. Residues 127-146 (ACSSENQENEENEQTEEGRP) are disordered. Residues 156-176 (LLCVTVISLCSLLGASVVPFM) traverse the membrane as a helical segment. At 177–184 (KKTFYKRL) the chain is on the cytoplasmic side. A helical membrane pass occupies residues 185–205 (LLYFIALAIGTLYSNALFQLI). The Extracellular segment spans residues 206 to 222 (PEAFGFNPMEDYYVSKS). A helical transmembrane segment spans residues 223–243 (AVVFGGFYLFFFTEKILKMLL). The Cytoplasmic segment spans residues 244–395 (KQKNEHHHGH…LLNAGMSLQQ (152 aa)). The short motif at 249 to 256 (HHHGHSHY) is the HHHGHXHX-motif element. The XEXPHE-motif motif lies at 374-379 (EEFPHE). Residues 396–416 (ALFFNFLSACCCYVGLGFGIL) form a helical membrane-spanning segment. Residues 417-422 (AGSHFS) lie on the Extracellular side of the membrane. Residues 423 to 443 (ANWIFALAGGMFLYISLADMF) form a helical membrane-spanning segment. Topologically, residues 444-459 (PEMNEVSQEDERKGSA) are cytoplasmic. A helical transmembrane segment spans residues 460–480 (LIPFVIQNLGLLTGFGIMLVL). At 481-490 (TMYSGHIQIG) the chain is on the extracellular side.

This sequence belongs to the ZIP transporter (TC 2.A.5) family. Homotrimer. In terms of processing, ubiquitinated. Ubiquitination occurs upon iron depletion. The ubiquitinated form undergoes proteasomal degradation. N-glycosylated. N-glycosylation at Asn-100 is required for iron-regulated extraction of the transporter from membranes and subsequent proteasomal degradation.

Its subcellular location is the cell membrane. The protein localises to the apical cell membrane. It is found in the basolateral cell membrane. The protein resides in the early endosome membrane. It localises to the late endosome membrane. Its subcellular location is the lysosome membrane. The enzyme catalyses Zn(2+)(out) + 2 hydrogencarbonate(out) = Zn(2+)(in) + 2 hydrogencarbonate(in). It carries out the reaction Mn(2+)(out) + 2 hydrogencarbonate(out) = Mn(2+)(in) + 2 hydrogencarbonate(in). It catalyses the reaction Fe(2+)(out) + 2 hydrogencarbonate(out) = Fe(2+)(in) + 2 hydrogencarbonate(in). The catalysed reaction is Cd(2+)(out) + 2 hydrogencarbonate(out) = Cd(2+)(in) + 2 hydrogencarbonate(in). Its function is as follows. Electroneutral transporter of the plasma membrane mediating the cellular uptake of the divalent metal cations zinc, manganese and iron that are important for tissue homeostasis, metabolism, development and immunity. Functions as an energy-dependent symporter, transporting through the membranes an electroneutral complex composed of a divalent metal cation and two bicarbonate anions. Beside these endogenous cellular substrates, can also import cadmium a non-essential metal which is cytotoxic and carcinogenic. The polypeptide is Metal cation symporter ZIP14 (Bos taurus (Bovine)).